A 268-amino-acid chain; its full sequence is Eukaryotic translation initiation factor 2 subunit beta (268 aa).

The segment covering 1–12 (MADEINEIREEQ) has biased composition (basic and acidic residues). Positions 1 to 85 (MADEINEIRE…LNNESVDAGE (85 aa)) are disordered. A2 is subject to N-acetylalanine. S42, S80, and S112 each carry phosphoserine; by CK2. Residues 222–246 (CLGCKSPDTILSKENRLFFLRCEKC) form a C4-type zinc finger.

The protein belongs to the eIF-2-beta/eIF-5 family. As to quaternary structure, eukaryotic translation initiation factor 2 eIF2 is a heterotrimeric complex composed of an alpha, a beta and a gamma subunit. In terms of processing, phosphorylated at Ser-42, Ser-80 and Ser-112 by CK2.

The protein resides in the cytoplasm. The protein localises to the cytosol. Its function is as follows. Component of the eIF2 complex that functions in the early steps of protein synthesis by forming a ternary complex with GTP and initiator tRNA. This complex binds to a 40S ribosomal subunit, followed by mRNA binding to form a 43S pre-initiation complex (43S PIC). Junction of the 60S ribosomal subunit to form the 80S initiation complex is preceded by hydrolysis of the GTP bound to eIF2 and release of an eIF2-GDP binary complex. In order for eIF2 to recycle and catalyze another round of initiation, the GDP bound to eIF2 must exchange with GTP by way of a reaction catalyzed by eIF2B. The chain is Eukaryotic translation initiation factor 2 subunit beta from Arabidopsis thaliana (Mouse-ear cress).